The following is an 816-amino-acid chain: S-layer protein (816 aa).

A signal peptide spans 1-29; that stretch reads MAKTNSYKKVIAGTMTAAMVAGVVSPVAA. 3 consecutive SLH domains span residues 30 to 93, 94 to 150, and 152 to 215; these read AGKS…DAKP, SFAD…KVNG, and PATK…VAKV. The BIG2 domain maps to 403–480; it reads FTSKDFKQND…TVKDSKGKEL (78 aa).

The protein resides in the secreted. It localises to the cell wall. Its subcellular location is the S-layer. In terms of biological role, the S-layer is a paracrystalline mono-layered assembly of proteins which coat the surface of bacteria. This chain is S-layer protein, found in Bacillus thuringiensis subsp. finitimus.